A 190-amino-acid polypeptide reads, in one-letter code: Holliday junction branch migration complex subunit RuvA (190 aa).

Residues 1–64 (MIGKLTGTLL…EDAQLLYGFG (64 aa)) are domain I. Residues 65 to 137 (TAQERQAFRE…LKGKLGADVG (73 aa)) are domain II. Positions 137–141 (GVRAH) are flexible linker. A domain III region spans residues 142–190 (AANDNQADILQALLALGYNDKEAAAALKALPADVGVSEGIKLALKSLSK).

This sequence belongs to the RuvA family. In terms of assembly, homotetramer. Forms an RuvA(8)-RuvB(12)-Holliday junction (HJ) complex. HJ DNA is sandwiched between 2 RuvA tetramers; dsDNA enters through RuvA and exits via RuvB. An RuvB hexamer assembles on each DNA strand where it exits the tetramer. Each RuvB hexamer is contacted by two RuvA subunits (via domain III) on 2 adjacent RuvB subunits; this complex drives branch migration. In the full resolvosome a probable DNA-RuvA(4)-RuvB(12)-RuvC(2) complex forms which resolves the HJ.

Its subcellular location is the cytoplasm. Its function is as follows. The RuvA-RuvB-RuvC complex processes Holliday junction (HJ) DNA during genetic recombination and DNA repair, while the RuvA-RuvB complex plays an important role in the rescue of blocked DNA replication forks via replication fork reversal (RFR). RuvA specifically binds to HJ cruciform DNA, conferring on it an open structure. The RuvB hexamer acts as an ATP-dependent pump, pulling dsDNA into and through the RuvAB complex. HJ branch migration allows RuvC to scan DNA until it finds its consensus sequence, where it cleaves and resolves the cruciform DNA. The sequence is that of Holliday junction branch migration complex subunit RuvA from Acidovorax ebreus (strain TPSY) (Diaphorobacter sp. (strain TPSY)).